The sequence spans 345 residues: N-malonyltransferase FDB2 (345 aa).

The active-site Acyl-thioester intermediate is C110. Residue H158 is the Proton acceptor of the active site. The active site involves D173.

It belongs to the arylamine N-acetyltransferase family.

It functions in the pathway xenobiotic degradation. Functionally, N-malonyltransferase; part of the Fusarium detoxification of benzoxazolinone cluster 2 (FDB2) involved in the degradation of benzoxazolinones produced by the host plant. Maize, wheat, and rye produce the 2 benzoxazinone phytoanticipins 2,4-dihy-droxy-7-methoxy-1,4-benzoxazin-3-one (DIMBOA) and 2,4-dihydroxy-1,4-benzoxazin-3-one (DIBOA) that, due to their inherent instability once released, spontaneously degrade to the more stable corresponding benzoxazolinones, 6-methoxy-2-benzoxazolinone (MBOA) and 2-benzoxazolinone (BOA), respectively. The first step in the detoxification of benzoxazolinones involves the hydrolysis of the cyclic ester bond of benzoxazolinones by the FDB1 cluster gamma-lactamase MBL1 to aminophenols. MBL1 is able to convert BOA into 2-aminophenol (2-AP), as well as MBOA into 5-methoxy-2-aminophenol (2-AMP). The FDB2 cluster N-malonyltransferase FDB2/NAT1 then metabolizes aminophenols via N-malonylation to non-toxic malonamic acids. FDB2/NAT1 converts 2-AP into N-(2-hydroxyphenyl) malonamic acid (HPMA) and 2-AMP into N-(2-hydroxy-4-methoxyphenyl) malonamic acid (HMPMA). The duplicated dienlactone hydrolases DLH1 and DLH2 may provide redundant function for hydrolyzing the lactone moiety in the BOA molecule. The roles of the amidases an other enzymes encoded by the 2 FDB clusters have not been identified so far. This Gibberella moniliformis (strain M3125 / FGSC 7600) (Maize ear and stalk rot fungus) protein is N-malonyltransferase FDB2.